We begin with the raw amino-acid sequence, 346 residues long: 3-keto-steroid reductase (346 aa).

Residues Leu20, Thr43, and Lys49 each coordinate NADP(+). Catalysis depends on proton donor residues Ser182 and Tyr205. Positions 205, 209, and 241 each coordinate NADP(+). Lys209 functions as the Lowers pKa of active site Tyr in the catalytic mechanism.

The protein belongs to the short-chain dehydrogenases/reductases (SDR) family. ERG27 subfamily.

It catalyses the reaction a 3beta-hydroxysteroid + NADP(+) = a 3-oxosteroid + NADPH + H(+). It participates in steroid biosynthesis; zymosterol biosynthesis; zymosterol from lanosterol: step 5/6. Responsible for the reduction of the keto group on the C-3 of sterols. In Debaryomyces hansenii (strain ATCC 36239 / CBS 767 / BCRC 21394 / JCM 1990 / NBRC 0083 / IGC 2968) (Yeast), this protein is 3-keto-steroid reductase (ERG27).